Consider the following 159-residue polypeptide: Cytochrome c-type biogenesis protein CcmE (159 aa).

Residues 1 to 8 (MNPRRKKR) lie on the Cytoplasmic side of the membrane. A helical; Signal-anchor for type II membrane protein transmembrane segment spans residues 9-29 (LLVIVAVLFGIGASIGLVLYA). The Periplasmic segment spans residues 30–159 (LQENINLFYT…KPKYNLDSGN (130 aa)). Heme contacts are provided by H130 and Y134.

The protein belongs to the CcmE/CycJ family.

Its subcellular location is the cell inner membrane. Functionally, heme chaperone required for the biogenesis of c-type cytochromes. Transiently binds heme delivered by CcmC and transfers the heme to apo-cytochromes in a process facilitated by CcmF and CcmH. This chain is Cytochrome c-type biogenesis protein CcmE, found in Pseudoalteromonas translucida (strain TAC 125).